Here is a 782-residue protein sequence, read N- to C-terminus: Protein PAT1 homolog 1 (782 aa).

4 disordered regions span residues 96-153, 177-217, 332-372, and 460-481; these read GPKH…HSKP, LPES…YSAP, VREH…SKHM, and EVDSSPGFNDGSGDHKGSGKHL. Positions 108 to 117 are enriched in low complexity; it reads SGSFSRESSS. Positions 208-217 are enriched in polar residues; the sequence is GGSQLTYSAP. A compositionally biased stretch (basic residues) spans 335-347; that stretch reads HKHKSSHRSRKNR. A compositionally biased stretch (polar residues) spans 348–366; it reads GLSQQTSDAASQKSETGLQ. A compositionally biased stretch (basic and acidic residues) spans 471–481; that stretch reads SGDHKGSGKHL.

In terms of assembly, interacts with AFPH2/NINJA. In terms of tissue distribution, expressed in root vasculature, shoot apical meristem (SAM) and leaves.

Its function is as follows. Activator of mRNA decapping. Involved in mRNA decay via decapping. Involved in the regulation of root stem cell niche identity. Maintains root stem cell niche stability through the interaction with the negative regulator of jasmonate signaling AFPH2/NINJA, and the regulation of cell division. The sequence is that of Protein PAT1 homolog 1 from Arabidopsis thaliana (Mouse-ear cress).